Here is an 872-residue protein sequence, read N- to C-terminus: Paladin (872 aa).

Residues 1–37 are disordered; it reads MGTTASAAQQVPSTVPSSENVQGNGSGSSNVEDRNSL. Glycine 2 carries the N-myristoyl glycine lipid modification. A coiled-coil region spans residues 186–210; it reads RRKENLHENLHDLEKGLRAENLELA.

The protein belongs to the paladin family.

It is found in the cytoplasm. The protein localises to the cytosol. This is Paladin (pald1) from Xenopus tropicalis (Western clawed frog).